The primary structure comprises 315 residues: Lipoyl synthase (315 aa).

The [4Fe-4S] cluster site is built by Cys-62, Cys-67, Cys-73, Cys-88, Cys-92, Cys-95, and Ser-302. In terms of domain architecture, Radical SAM core spans 74-291 (FGKGTATFMI…ETEALRMGFR (218 aa)).

This sequence belongs to the radical SAM superfamily. Lipoyl synthase family. [4Fe-4S] cluster serves as cofactor.

It localises to the cytoplasm. It catalyses the reaction [[Fe-S] cluster scaffold protein carrying a second [4Fe-4S](2+) cluster] + N(6)-octanoyl-L-lysyl-[protein] + 2 oxidized [2Fe-2S]-[ferredoxin] + 2 S-adenosyl-L-methionine + 4 H(+) = [[Fe-S] cluster scaffold protein] + N(6)-[(R)-dihydrolipoyl]-L-lysyl-[protein] + 4 Fe(3+) + 2 hydrogen sulfide + 2 5'-deoxyadenosine + 2 L-methionine + 2 reduced [2Fe-2S]-[ferredoxin]. It participates in protein modification; protein lipoylation via endogenous pathway; protein N(6)-(lipoyl)lysine from octanoyl-[acyl-carrier-protein]: step 2/2. Functionally, catalyzes the radical-mediated insertion of two sulfur atoms into the C-6 and C-8 positions of the octanoyl moiety bound to the lipoyl domains of lipoate-dependent enzymes, thereby converting the octanoylated domains into lipoylated derivatives. This Azoarcus sp. (strain BH72) protein is Lipoyl synthase.